We begin with the raw amino-acid sequence, 71 residues long: Protein SlyX homolog (71 aa).

The interval 49–71 is disordered; sequence KIKESQSSSSMMSNEPEPPPPHY.

It belongs to the SlyX family.

This is Protein SlyX homolog from Pseudoalteromonas translucida (strain TAC 125).